Here is a 465-residue protein sequence, read N- to C-terminus: Chromosomal replication initiator protein DnaA (465 aa).

The segment at 1–87 (MLWTDCLTRL…RPGSILSSSE (87 aa)) is domain I, interacts with DnaA modulators. Positions 81-123 (SILSSSEQPATTTAALQTAPIPQPAKVKREPEPVANTAVSSKS) are disordered. Positions 88–100 (QPATTTAALQTAP) are enriched in low complexity. The interval 88 to 127 (QPATTTAALQTAPIPQPAKVKREPEPVANTAVSSKSSKKK) is domain II. A domain III, AAA+ region region spans residues 128 to 345 (LLNPQFTFSL…GALNKVVAIS (218 aa)). 4 residues coordinate ATP: Gly173, Gly175, Lys176, and Thr177. Residues 346–465 (RFKGAPIDLD…YKNLLRLLQS (120 aa)) are domain IV, binds dsDNA.

This sequence belongs to the DnaA family. As to quaternary structure, oligomerizes as a right-handed, spiral filament on DNA at oriC.

The protein localises to the cytoplasm. Functionally, plays an essential role in the initiation and regulation of chromosomal replication. ATP-DnaA binds to the origin of replication (oriC) to initiate formation of the DNA replication initiation complex once per cell cycle. Binds the DnaA box (a 9 base pair repeat at the origin) and separates the double-stranded (ds)DNA. Forms a right-handed helical filament on oriC DNA; dsDNA binds to the exterior of the filament while single-stranded (ss)DNA is stabiized in the filament's interior. The ATP-DnaA-oriC complex binds and stabilizes one strand of the AT-rich DNA unwinding element (DUE), permitting loading of DNA polymerase. After initiation quickly degrades to an ADP-DnaA complex that is not apt for DNA replication. Binds acidic phospholipids. This chain is Chromosomal replication initiator protein DnaA, found in Acinetobacter baumannii (strain AB307-0294).